A 265-amino-acid polypeptide reads, in one-letter code: Chlorophyll a-b binding protein 1A, chloroplastic (265 aa).

The N-terminal 34 residues, 1-34 (MAAAAMALSSPSFAGQAVKLSPSASENSGNGRIT), are a transit peptide targeting the chloroplast. A helical transmembrane segment spans residues 151-171 (LVHAQSILAIWACQVVLMGAV). 6 residues coordinate chlorophyll b: Val-152, Ser-156, Gln-164, Glu-172, Arg-175, and Leu-181. 7 residues coordinate chlorophyll a: Lys-212, Glu-213, Asn-216, Arg-218, Gln-230, His-245, and Ala-254. Residues 219–239 (LAMFSMFGFFVQAIVTGKGPL) form a helical membrane-spanning segment. A chlorophyll b-binding site is contributed by Phe-261.

The protein belongs to the light-harvesting chlorophyll a/b-binding (LHC) protein family. The LHC complex consists of chlorophyll a-b binding proteins. Binds at least 14 chlorophylls (8 Chl-a and 6 Chl-b) and carotenoids such as lutein and neoxanthin. is required as a cofactor. In terms of processing, photoregulated by reversible phosphorylation of its threonine residues.

The protein resides in the plastid. It localises to the chloroplast thylakoid membrane. Its function is as follows. The light-harvesting complex (LHC) functions as a light receptor, it captures and delivers excitation energy to photosystems with which it is closely associated. In Solanum lycopersicum (Tomato), this protein is Chlorophyll a-b binding protein 1A, chloroplastic (CAB1A).